The chain runs to 217 residues: Peptide deformylase (217 aa).

Fe cation contacts are provided by C91 and H133. E134 is a catalytic residue. H137 contributes to the Fe cation binding site. The tract at residues 153–217 (VSEDGEEEEE…RRGSAAAKEE (65 aa)) is disordered. Acidic residues predominate over residues 155 to 176 (EDGEEEEEAEVAEVMPEPEAEG). Low complexity predominate over residues 177 to 192 (AGEPSAEGAGQAAAEA). Basic and acidic residues predominate over residues 206–217 (GERRGSAAAKEE).

The protein belongs to the polypeptide deformylase family. It depends on Fe(2+) as a cofactor.

The catalysed reaction is N-terminal N-formyl-L-methionyl-[peptide] + H2O = N-terminal L-methionyl-[peptide] + formate. In terms of biological role, removes the formyl group from the N-terminal Met of newly synthesized proteins. Requires at least a dipeptide for an efficient rate of reaction. N-terminal L-methionine is a prerequisite for activity but the enzyme has broad specificity at other positions. The protein is Peptide deformylase of Symbiobacterium thermophilum (strain DSM 24528 / JCM 14929 / IAM 14863 / T).